The primary structure comprises 106 residues: Large ribosomal subunit protein eL42Q (106 aa).

Belongs to the eukaryotic ribosomal protein eL42 family.

The chain is Large ribosomal subunit protein eL42Q (RIM-C) from Candida maltosa (Yeast).